The chain runs to 626 residues: Chaperone protein HtpG (626 aa).

An a; substrate-binding region spans residues 1-339 (MSTNQETRGF…SNDLPLNVSR (339 aa)). The b stretch occupies residues 340–555 (EILQDNKVTA…NDQMTTQMAK (216 aa)). The c stretch occupies residues 556–626 (LFAAAGQPVP…FIKRVNSLLS (71 aa)).

The protein belongs to the heat shock protein 90 family. As to quaternary structure, homodimer.

It localises to the cytoplasm. Its function is as follows. Molecular chaperone. Has ATPase activity. The chain is Chaperone protein HtpG from Histophilus somni (strain 129Pt) (Haemophilus somnus).